A 289-amino-acid polypeptide reads, in one-letter code: CRISPR-associated endoribonuclease Cas6 2 (289 aa).

It belongs to the CRISPR-associated endoribonuclease Cas6 family. Possibly part of the aCascade ribonucleoprotein complex. The cofactor is Mg(2+).

In terms of biological role, CRISPR (clustered regularly interspaced short palindromic repeat) is an adaptive immune system that provides protection against mobile genetic elements (viruses, transposable elements and conjugative plasmids). CRISPR clusters contain sequences complementary to antecedent mobile elements and target invading nucleic acids. CRISPR clusters are transcribed and processed into CRISPR RNA (crRNA). Functions as a ssRNA-specific endoribonuclease, generating an 8 base-long tag known as the 5' handle. This Saccharolobus solfataricus (strain ATCC 35092 / DSM 1617 / JCM 11322 / P2) (Sulfolobus solfataricus) protein is CRISPR-associated endoribonuclease Cas6 2 (cas6b).